The following is a 209-amino-acid chain: Imidazoleglycerol-phosphate dehydratase (209 aa).

It belongs to the imidazoleglycerol-phosphate dehydratase family.

It localises to the cytoplasm. The enzyme catalyses D-erythro-1-(imidazol-4-yl)glycerol 3-phosphate = 3-(imidazol-4-yl)-2-oxopropyl phosphate + H2O. Its pathway is amino-acid biosynthesis; L-histidine biosynthesis; L-histidine from 5-phospho-alpha-D-ribose 1-diphosphate: step 6/9. This is Imidazoleglycerol-phosphate dehydratase from Prochlorococcus marinus (strain MIT 9313).